The sequence spans 491 residues: MGERDDEAEGILEKAKIPLLKDQNVAEEENGEIKKEIWLETKKLWRIVGPAIFTRVTTNLIFVITQAFAGHLGELELAAISIVNNVIIGFNYSLFIGMATALETLCGQAFGAKKYDMFGVYLQRSWIVLFLFSILLLPMYIFATPILKFMGQPDDIAELSGIISVWAIPTHFSFAFFFPINRFLQCQLKNSVIAISSGVSLVVHIFVCWLFVYVLELGVIGTIATANVSWWLNVFILFTYTTCGGCPLTWTGFSMESFTRLWEFTKLSASSGIMVCLENWYYRMLIVMTGNLEDARIDVDSMSICMSINGLEMMVPLAFFAGTSVRVANELGAGNGKRARFAMIISVTQSLIIGIIISVLIYFLLDQIGWMFSSSETVLKAVNNLSILLSFAILLNSVQPVLSGVAVGSGWQSLVAFINLGCYYFIGLPLGIVMGWMFKFGVKGIWAGMIFGGTMVQTLILIFITMRCDWEKEAQNAKVRVNKWSVSDARK.

A run of 12 helical transmembrane segments spans residues 47–67, 77–97, 127–147, 160–180, 192–212, 228–248, 272–292, 302–322, 352–372, 387–407, 414–434, and 444–464; these read IVGPAIFTRVTTNLIFVITQA, LAAISIVNNVIIGFNYSLFIG, IVLFLFSILLLPMYIFATPIL, SGIISVWAIPTHFSFAFFFPI, VIAISSGVSLVVHIFVCWLFV, VSWWLNVFILFTYTTCGGCPL, GIMVCLENWYYRMLIVMTGNL, MSICMSINGLEMMVPLAFFAG, IIGIIISVLIYFLLDQIGWMF, ILLSFAILLNSVQPVLSGVAV, LVAFINLGCYYFIGLPLGIVM, and GIWAGMIFGGTMVQTLILIFI.

This sequence belongs to the multi antimicrobial extrusion (MATE) (TC 2.A.66.1) family.

It is found in the membrane. This is Protein DETOXIFICATION 28 from Arabidopsis thaliana (Mouse-ear cress).